A 98-amino-acid chain; its full sequence is MAPKKTTKKGGPKKRPSAEKRIITSQKRCLINQSFKSKAKTMMKKFEAALKAGDQTSIASGLQLVYSVVDKAVKRGILKHNKAARIKSRATLRANAKI.

A compositionally biased stretch (basic residues) spans 1–15 (MAPKKTTKKGGPKKR). Residues 1–21 (MAPKKTTKKGGPKKRPSAEKR) form a disordered region.

This sequence belongs to the bacterial ribosomal protein bS20 family.

Functionally, binds directly to 16S ribosomal RNA. This chain is Small ribosomal subunit protein bS20, found in Chlamydia abortus (strain DSM 27085 / S26/3) (Chlamydophila abortus).